Consider the following 240-residue polypeptide: Urease accessory protein UreF (240 aa).

The protein belongs to the UreF family. As to quaternary structure, ureD, UreF and UreG form a complex that acts as a GTP-hydrolysis-dependent molecular chaperone, activating the urease apoprotein by helping to assemble the nickel containing metallocenter of UreC. The UreE protein probably delivers the nickel.

It is found in the cytoplasm. In terms of biological role, required for maturation of urease via the functional incorporation of the urease nickel metallocenter. The protein is Urease accessory protein UreF of Rhodopseudomonas palustris (strain TIE-1).